The sequence spans 800 residues: DNA topoisomerase 4 subunit A (800 aa).

The Topo IIA-type catalytic domain maps to Leu31–Glu495. Catalysis depends on Tyr119, which acts as the O-(5'-phospho-DNA)-tyrosine intermediate.

Belongs to the type II topoisomerase GyrA/ParC subunit family. ParC type 2 subfamily. As to quaternary structure, heterotetramer composed of ParC and ParE.

It is found in the cell membrane. The catalysed reaction is ATP-dependent breakage, passage and rejoining of double-stranded DNA.. Its function is as follows. Topoisomerase IV is essential for chromosome segregation. It relaxes supercoiled DNA. Performs the decatenation events required during the replication of a circular DNA molecule. This chain is DNA topoisomerase 4 subunit A, found in Staphylococcus aureus (strain NCTC 8325 / PS 47).